The following is a 334-amino-acid chain: Immune-associated nucleotide-binding protein 3 (334 aa).

The AIG1-type G domain occupies 11 to 219; sequence KAVKNIVLVG…FRGKMYLEIK (209 aa). The G1 stretch occupies residues 20 to 27; the sequence is GRTGNGKS. GTP contacts are provided by residues 20–28 and Ser-41; that span reads GRTGNGKSA. The G2 stretch occupies residues 47 to 51; sequence GVTKT. The interval 69-72 is G3; it reads DTPG. Residues 139 to 142 are G4; it reads TGGD. The G5 stretch occupies residues 178 to 180; the sequence is NNM. Asn-179 lines the GTP pocket. The stretch at 272-306 forms a coiled coil; sequence SAAHERMVSMLNENLENAHRENIDLRKAHDHEQKK.

The protein belongs to the TRAFAC class TrmE-Era-EngA-EngB-Septin-like GTPase superfamily. AIG1/Toc34/Toc159-like paraseptin GTPase family. IAN subfamily. In terms of tissue distribution, mostly expressed in pollen. Also detected in lateral roots and radicles.

This is Immune-associated nucleotide-binding protein 3 from Arabidopsis thaliana (Mouse-ear cress).